Here is a 419-residue protein sequence, read N- to C-terminus: L-rhamnose isomerase (419 aa).

3 residues coordinate Mn(2+): H262, D294, and D296.

Belongs to the rhamnose isomerase family. As to quaternary structure, homotetramer. Requires Mn(2+) as cofactor.

It is found in the cytoplasm. The catalysed reaction is L-rhamnopyranose = L-rhamnulose. The protein operates within carbohydrate degradation; L-rhamnose degradation; glycerone phosphate from L-rhamnose: step 1/3. In terms of biological role, catalyzes the interconversion of L-rhamnose and L-rhamnulose. The chain is L-rhamnose isomerase from Klebsiella pneumoniae subsp. pneumoniae (strain ATCC 700721 / MGH 78578).